The following is a 518-amino-acid chain: Efflux pump terJ (518 aa).

The chain crosses the membrane as a helical span at residues 43-63 (IAFIVVVCMAQLVSQAGLGQV). N79 carries an N-linked (GlcNAc...) asparagine glycan. A run of 12 helical transmembrane segments spans residues 82–102 (QLSW…LGAG), 112–132 (LLFT…AFAE), 135–155 (GPVF…FLLP), 177–197 (AFGS…ALAA), 204–224 (WGFW…IFWV), 244–264 (IAGC…LNMA), 272–292 (PYIY…GYIE), 311–331 (FVLA…FYGW), 339–359 (GISP…GFVA), 364–384 (GLIL…AAFC), 400–420 (WAQL…SFPA), and 439–459 (SLVA…GAIV). Residue N466 is glycosylated (N-linked (GlcNAc...) asparagine). A helical transmembrane segment spans residues 477–497 (AWYLGVGLAASGIILTMFFAL).

Belongs to the major facilitator superfamily.

It localises to the cell membrane. Its function is as follows. Efflux pump that might be required for efficient secretion of terrein or other secondary metabolies produced by the terrein genne cluster. This chain is Efflux pump terJ, found in Aspergillus terreus (strain NIH 2624 / FGSC A1156).